Here is an 88-residue protein sequence, read N- to C-terminus: Sec-independent protein translocase protein TatA (88 aa).

The chain crosses the membrane as a helical span at residues 4-24 (LSIWHWLIVLAVVLVLFVGGG). The segment at 45 to 88 (ADDETMEGSTGSGGHIAPPGPAAGTVQRDASFSGTGRPSGSSTP) is disordered. Low complexity predominate over residues 75-88 (SFSGTGRPSGSSTP).

This sequence belongs to the TatA/E family. The Tat system comprises two distinct complexes: a TatABC complex, containing multiple copies of TatA, TatB and TatC subunits, and a separate TatA complex, containing only TatA subunits. Substrates initially bind to the TatABC complex, which probably triggers association of the separate TatA complex to form the active translocon.

The protein localises to the cell inner membrane. Part of the twin-arginine translocation (Tat) system that transports large folded proteins containing a characteristic twin-arginine motif in their signal peptide across membranes. TatA could form the protein-conducting channel of the Tat system. In Gluconacetobacter diazotrophicus (strain ATCC 49037 / DSM 5601 / CCUG 37298 / CIP 103539 / LMG 7603 / PAl5), this protein is Sec-independent protein translocase protein TatA.